We begin with the raw amino-acid sequence, 651 residues long: Peptide-N(4)-(N-acetyl-beta-glucosaminyl)asparagine amidase (651 aa).

N-acetylalanine is present on A2. The region spanning 30 to 91 (EASKLLLTYA…EGETHLIFPK (62 aa)) is the PUB domain. The tract at residues 116-153 (SSQKVEFSQHPAAVRLPAEQPEDPTGLMQHSGNQPGQP) is disordered. Positions 143–152 (MQHSGNQPGQ) are enriched in polar residues. Zn(2+)-binding residues include C247, C250, C280, and C283. C306 (nucleophile) is an active-site residue. Residues H333 and D350 contribute to the active site. A PAW domain is found at 451 to 651 (ELGGRVSGSL…LEIIITFSDL (201 aa)).

Belongs to the transglutaminase-like superfamily. PNGase family. As to quaternary structure, component of a complex required to couple retrotranslocation, ubiquitination and deglycosylation composed of NGLY1, SAKS1, AMFR, VCP and RAD23B. Interacts with the proteasome components RAD23B and PSMC1. Interacts with directly with VCP. Interacts with DERL1, bringing it close to the endoplasmic reticulum membrane. Interacts with SAKS1. Requires Zn(2+) as cofactor.

The protein resides in the cytoplasm. The catalysed reaction is Hydrolysis of an N(4)-(acetyl-beta-D-glucosaminyl)asparagine residue in which the glucosamine residue may be further glycosylated, to yield a (substituted) N-acetyl-beta-D-glucosaminylamine and a peptide containing an aspartate residue.. Its activity is regulated as follows. Inhibited by Z-VAD-fmk, a well-known caspase inhibitor, which inhibits enzyme activity through covalent binding of the carbohydrate to the single Cys-306 residue. Its function is as follows. Specifically deglycosylates the denatured form of N-linked glycoproteins in the cytoplasm and assists their proteasome-mediated degradation. Cleaves the beta-aspartyl-glucosamine (GlcNAc) of the glycan and the amide side chain of Asn, converting Asn to Asp. Prefers proteins containing high-mannose over those bearing complex type oligosaccharides. Can recognize misfolded proteins in the endoplasmic reticulum that are exported to the cytosol to be destroyed and deglycosylate them, while it has no activity toward native proteins. Deglycosylation is a prerequisite for subsequent proteasome-mediated degradation of some, but not all, misfolded glycoproteins. The sequence is that of Peptide-N(4)-(N-acetyl-beta-glucosaminyl)asparagine amidase (Ngly1) from Rattus norvegicus (Rat).